Here is a 467-residue protein sequence, read N- to C-terminus: UDP-N-acetylmuramate--L-alanine ligase (467 aa).

114-120 is an ATP binding site; it reads GTHGKTT.

This sequence belongs to the MurCDEF family.

It is found in the cytoplasm. It carries out the reaction UDP-N-acetyl-alpha-D-muramate + L-alanine + ATP = UDP-N-acetyl-alpha-D-muramoyl-L-alanine + ADP + phosphate + H(+). Its pathway is cell wall biogenesis; peptidoglycan biosynthesis. Its function is as follows. Cell wall formation. This is UDP-N-acetylmuramate--L-alanine ligase from Rhodopseudomonas palustris (strain BisB18).